The chain runs to 773 residues: Molybdenum cofactor sulfurase (773 aa).

Lys243 is modified (N6-(pyridoxal phosphate)lysine). Cys410 is a catalytic residue. The MOSC domain occupies 632–773; sequence LRLLRQSGQR…LSCGDTVLVE (142 aa). Ser731 is modified (phosphoserine).

The protein belongs to the class-V pyridoxal-phosphate-dependent aminotransferase family. MOCOS subfamily. The cofactor is pyridoxal 5'-phosphate.

The catalysed reaction is Mo-molybdopterin + L-cysteine + AH2 = thio-Mo-molybdopterin + L-alanine + A + H2O. It functions in the pathway cofactor biosynthesis; molybdopterin biosynthesis. Functionally, sulfurates the molybdenum cofactor. Sulfation of molybdenum is essential for xanthine dehydrogenase (XDH) and aldehyde oxidase (ADO) enzymes in which molybdenum cofactor is liganded by 1 oxygen and 1 sulfur atom in active form. The chain is Molybdenum cofactor sulfurase from Drosophila ananassae (Fruit fly).